The chain runs to 368 residues: Ethanol acetyltransferase 1 (368 aa).

The N-terminal 21 residues, 1-21, are a transit peptide targeting the mitochondrion; it reads MFLSLRPSLSVSRLAVVRRAY. Residues 67-171 form the AB hydrolase-1 domain; it reads PIIFFHGLLG…IIDNAPEPQP (105 aa). Active-site charge relay system residues include Ser140, Asp164, and His315. The interval 344-368 is disordered; sequence RNKDPNNYMQTQNSISNSDTMGQSL. The segment covering 348-368 has biased composition (polar residues); it reads PNNYMQTQNSISNSDTMGQSL.

The protein belongs to the AB hydrolase superfamily.

It is found in the mitochondrion. It catalyses the reaction ethanol + acetyl-CoA = ethyl acetate + CoA. The catalysed reaction is acetyl-CoA + H2O = acetate + CoA + H(+). The enzyme catalyses ethyl acetate + H2O = ethanol + acetate + H(+). Alcohol acetyltransferase that catalyzes the synthesis of ethyl acetate from ethanol and acetyl-CoA. Can also function as a thioesterase by hydrolyzing acetyl-CoA in the absence of ethanol, as well as esterase hydrolyzing ethyl acetate. This chain is Ethanol acetyltransferase 1 (EAT1), found in Kluyveromyces lactis (strain ATCC 8585 / CBS 2359 / DSM 70799 / NBRC 1267 / NRRL Y-1140 / WM37) (Yeast).